Reading from the N-terminus, the 481-residue chain is UDP-N-acetylmuramoyl-L-alanyl-D-glutamate--L-lysine ligase (481 aa).

Ser42 serves as a coordination point for UDP-N-acetyl-alpha-D-muramoyl-L-alanyl-D-glutamate. 118–124 (GTKGKTT) provides a ligand contact to ATP. UDP-N-acetyl-alpha-D-muramoyl-L-alanyl-D-glutamate-binding positions include Gln158, 160-161 (TT), Ser187, and Arg195. Lys229 is subject to N6-carboxylysine. Positions 404-407 (DDPN) match the L-lysine recognition motif motif.

This sequence belongs to the MurCDEF family. MurE subfamily. In terms of processing, carboxylation is probably crucial for Mg(2+) binding and, consequently, for the gamma-phosphate positioning of ATP.

The protein localises to the cytoplasm. The catalysed reaction is UDP-N-acetyl-alpha-D-muramoyl-L-alanyl-D-glutamate + L-lysine + ATP = UDP-N-acetyl-alpha-D-muramoyl-L-alanyl-gamma-D-glutamyl-L-lysine + ADP + phosphate + H(+). The protein operates within cell wall biogenesis; peptidoglycan biosynthesis. Its function is as follows. Catalyzes the addition of L-lysine to the nucleotide precursor UDP-N-acetylmuramoyl-L-alanyl-D-glutamate (UMAG) in the biosynthesis of bacterial cell-wall peptidoglycan. This chain is UDP-N-acetylmuramoyl-L-alanyl-D-glutamate--L-lysine ligase, found in Streptococcus pyogenes serotype M28 (strain MGAS6180).